A 135-amino-acid polypeptide reads, in one-letter code: MACGLVASNLNLKPGECLRVRGEVAPDAKSFLLNLGKDDNNLCLHFNPRFNAHGDINTIVCNSKDGGAWGAEQREVAFPFQPGSVVEVCISFNQADLTVKLPDGHEFKFPNRLNLEAINYMSAGGDFKIKCVAFD.

The residue at position 2 (Ala2) is an N-acetylalanine. A Galectin domain is found at 4 to 135; the sequence is GLVASNLNLK…DFKIKCVAFD (132 aa). N6-acetyllysine occurs at positions 13 and 29. Phosphoserine is present on Ser30. Residues 45–49, His53, Asn62, and 69–72 each bind a beta-D-galactoside; these read HFNPR and WGAE. Lys108 is subject to N6-acetyllysine; alternate. N6-succinyllysine; alternate is present on Lys108. Residue Lys128 is modified to N6-acetyllysine.

Homodimer. Binds LGALS3BP. Interacts with CD2, CD3, CD4, CD6, CD7, CD43, ALCAM and CD45. Interacts with laminin (via poly-N-acetyllactosamine). Interacts with SUSD2. Interacts with cargo receptor TMED10; the interaction mediates the translocation from the cytoplasm into the ERGIC (endoplasmic reticulum-Golgi intermediate compartment) and thereby secretion. In terms of processing, the N-terminus is blocked.

The protein localises to the secreted. The protein resides in the extracellular space. It localises to the extracellular matrix. Its subcellular location is the cytoplasm. Functionally, lectin that binds beta-galactoside and a wide array of complex carbohydrates. Plays a role in regulating apoptosis, cell proliferation and cell differentiation. Inhibits CD45 protein phosphatase activity and therefore the dephosphorylation of Lyn kinase. Strong inducer of T-cell apoptosis. In Bubalus bubalis (Domestic water buffalo), this protein is Galectin-1.